A 113-amino-acid polypeptide reads, in one-letter code: Ig heavy chain V region 36-60 (113 aa).

The protein is Ig heavy chain V region 36-60 of Mus musculus (Mouse).